A 742-amino-acid polypeptide reads, in one-letter code: 5-methyltetrahydropteroyltriglutamate--homocysteine methyltransferase (742 aa).

5-methyltetrahydropteroyltri-L-glutamate contacts are provided by residues 18 to 21 and Lys-112; that span reads REWK. L-homocysteine contacts are provided by residues 420 to 422 and Glu-473; that span reads IGS. L-methionine-binding positions include 420-422 and Glu-473; that span reads IGS. Trp-550 contributes to the 5-methyltetrahydropteroyltri-L-glutamate binding site. Asp-588 contacts L-homocysteine. Position 588 (Asp-588) interacts with L-methionine. Glu-594 provides a ligand contact to 5-methyltetrahydropteroyltri-L-glutamate. Zn(2+) contacts are provided by His-630, Cys-632, and Glu-654. His-683 functions as the Proton donor in the catalytic mechanism. A Zn(2+)-binding site is contributed by Cys-715.

It belongs to the vitamin-B12 independent methionine synthase family. Zn(2+) serves as cofactor.

The catalysed reaction is 5-methyltetrahydropteroyltri-L-glutamate + L-homocysteine = tetrahydropteroyltri-L-glutamate + L-methionine. Its pathway is amino-acid biosynthesis; L-methionine biosynthesis via de novo pathway; L-methionine from L-homocysteine (MetE route): step 1/1. Catalyzes the transfer of a methyl group from 5-methyltetrahydrofolate to homocysteine resulting in methionine formation. This Staphylococcus aureus (strain Mu3 / ATCC 700698) protein is 5-methyltetrahydropteroyltriglutamate--homocysteine methyltransferase.